Here is a 252-residue protein sequence, read N- to C-terminus: Protein IRON-RELATED TRANSCRIPTION FACTOR 3 (252 aa).

The segment at Pro-36–Arg-49 is basic motif. In terms of domain architecture, bHLH spans Pro-36–Leu-86. The tract at residues Gly-50 to Leu-86 is helix-loop-helix motif. Positions Leu-76–Glu-131 form a coiled coil. The tract at residues Arg-135 to Met-252 is disordered. The span at Pro-162–Thr-176 shows a compositional bias: low complexity. Residues Pro-208–Glu-219 show a composition bias toward acidic residues.

Belongs to the bHLH protein family.

Its subcellular location is the nucleus. Its function is as follows. Transcription factor that acts as a negative regulator of the iron deficiency response. Suppresses the induction of iron deficiency responsive genes, such as NAS1, NAS2, IRO2, IRT1, YSL15, and NRAMP1. The sequence is that of Protein IRON-RELATED TRANSCRIPTION FACTOR 3 from Oryza sativa subsp. japonica (Rice).